A 179-amino-acid polypeptide reads, in one-letter code: NADH-quinone oxidoreductase subunit B 1 (179 aa).

The [4Fe-4S] cluster site is built by cysteine 38, cysteine 39, cysteine 104, and cysteine 133.

It belongs to the complex I 20 kDa subunit family. NDH-1 is composed of 14 different subunits. Subunits NuoB, C, D, E, F, and G constitute the peripheral sector of the complex. The cofactor is [4Fe-4S] cluster.

It is found in the cell membrane. It carries out the reaction a quinone + NADH + 5 H(+)(in) = a quinol + NAD(+) + 4 H(+)(out). In terms of biological role, NDH-1 shuttles electrons from NADH, via FMN and iron-sulfur (Fe-S) centers, to quinones in the respiratory chain. The immediate electron acceptor for the enzyme in this species is believed to be ubiquinone. Couples the redox reaction to proton translocation (for every two electrons transferred, four hydrogen ions are translocated across the cytoplasmic membrane), and thus conserves the redox energy in a proton gradient. The chain is NADH-quinone oxidoreductase subunit B 1 from Herpetosiphon aurantiacus (strain ATCC 23779 / DSM 785 / 114-95).